A 300-amino-acid polypeptide reads, in one-letter code: Iron/alpha-ketoglutarate-dependent dioxygenase okaE (300 aa).

Fe cation is bound by residues His-134, Asp-136, and His-210.

It belongs to the PhyH family. Homodimer. It depends on Fe cation as a cofactor.

It catalyses the reaction okaramine A + 2-oxoglutarate + AH2 + O2 = 12-deshydroxyl okaramine E + succinate + A + CO2 + H2O. The catalysed reaction is 12-deshydroxyl okaramine E + 2-oxoglutarate + O2 = okaramine E + succinate + CO2. It carries out the reaction okaramine A + 2-oxoglutarate + O2 = okaramine E + succinate + CO2. It functions in the pathway alkaloid biosynthesis. The protein operates within secondary metabolite biosynthesis; terpenoid biosynthesis. Iron/alpha-ketoglutarate-dependent dioxygenase; part of the gene cluster that mediates the biosynthesis of okaramine B, a prenylated indole alkaloid that possesses an unusual octacyclic ring system, including a four-membered azetidine ring and an eight-membered azocine ring, and that exhibits insecticidal activity against silkworm larvae. Within the pathway, okaE forms the unusual 2-dimethyl-3-methyl-azetidine ring to yield 12-deshydroxyl okaramine E from okaramine A. OkaE also catalyzes the hydroxylation of 12-deshydroxyl okaramine E to produce okaramine E. The biosynthesis begins with the NRPS okaA that condenses two tryptophan molecules into cyclo(L-Trp-L-Trp). Prenylation by the prenyltransferase okaC then leads to the formation of cyclo(N8-(alpha,alpha-dimethylallyl)-L-Trp-6a-(alpha,alpha-dime-thylallyl)-L-Trp). This is followed by indole 2,3-epoxidation by the FAD-dependent monooxygenase okaB to facilitate the formation of the hexahydropyrrolo[2,3-b]indole (HPI) moiety of okaramine C. The cytochrome P450 monooxygenase okaD then likely catalyzes formation of the eight-membered ring of okaramine A. The dioxygenase okaE further forms the unusual 2-dimethyl-3-methyl-azetidine ring to yield 12-deshydroxyl okaramine E, as well as the hydroxylation of 12-deshydroxyl okaramine E to produce okaramine E. The cytochrome P450 monoxygenase okaG converts 12-deshydroxyl okaramine E into 3-desmethyl okaramine B which is further methylated by the methyltransferase okaF into okaramine B. In a shunt pathway, okaG and okaF together are also able to convert okaramine E into okaramine D. Okaramine H is produced by nonenzymatic conversion from okaramine A. The protein is Iron/alpha-ketoglutarate-dependent dioxygenase okaE of Penicillium ochrochloron.